The sequence spans 231 residues: Chromosome partition protein MukE (231 aa).

The disordered stretch occupies residues 195–231; sequence MIRDGEAMPVEGSLSLKDDSDDNDRTDDTAPETGEDE. Positions 213-231 are enriched in acidic residues; sequence DSDDNDRTDDTAPETGEDE.

This sequence belongs to the MukE family. In terms of assembly, interacts, and probably forms a ternary complex, with MukF and MukB. The complex formation is stimulated by calcium or magnesium.

Its subcellular location is the cytoplasm. The protein resides in the nucleoid. In terms of biological role, involved in chromosome condensation, segregation and cell cycle progression. May participate in facilitating chromosome segregation by condensation DNA from both sides of a centrally located replisome during cell division. Probably acts via its interaction with MukB and MukF. This is Chromosome partition protein MukE from Pectobacterium atrosepticum (strain SCRI 1043 / ATCC BAA-672) (Erwinia carotovora subsp. atroseptica).